A 67-amino-acid polypeptide reads, in one-letter code: Ayadualin (67 aa).

Positions 1-20 (MNKIILFSAVFLALVFCAEA) are cleaved as a signal peptide. Acidic residues predominate over residues 35–54 (PDDTVDIDEGLPDAFDEDYE). The tract at residues 35-67 (PDDTVDIDEGLPDAFDEDYEQDGHNPYPCRGDC) is disordered. Positions 64 to 66 (RGD) match the Integrin-binding motif motif.

Salivary gland.

The protein resides in the secreted. Inhibits collagen- and ADP-induced host platelet aggregation by blocking the binding of host integrin alpha-IIb/beta-3 (ITGA2B/ITGB3) to fibrinogen. Inhibits the intrinsic blood coagulation pathway in the host by blocking the activity of host coagulation factor XIIa (F12). The chain is Ayadualin from Lutzomyia ayacuchensis (Sand fly).